We begin with the raw amino-acid sequence, 349 residues long: Green-sensitive opsin-3 (349 aa).

The Extracellular segment spans residues 1–36 (MNGTEGNNFYIPMSNRTGLVRSPYEYPQYYLAEPWQ). 2 N-linked (GlcNAc...) asparagine glycosylation sites follow: N2 and N15. A helical transmembrane segment spans residues 37 to 61 (FKLLAVYMFFLMCFGFPINGLTLVV). Over 62 to 73 (TAQHKKLRQPLN) the chain is Cytoplasmic. Residues 74–99 (FILVNLAVAGTIMVCFGFTVTFYTAI) form a helical membrane-spanning segment. Topologically, residues 100–113 (NGYFVLGPTGCAIE) are extracellular. C110 and C187 are joined by a disulfide. Residues 114-133 (GFMATLGGQISLWSLVVLAI) form a helical membrane-spanning segment. Topologically, residues 134-152 (ERYIVVCKPMGSFKFSSNH) are cytoplasmic. A helical transmembrane segment spans residues 153 to 176 (AFAGIGFTWIMALSCAAPPLVGWS). Residues 177–202 (RYIPEGMQCSCGPDYYTLNPDYNNES) lie on the Extracellular side of the membrane. N200 carries N-linked (GlcNAc...) asparagine glycosylation. Residues 203-230 (YVLYMFCCHFIFPVTTIFFTYGRLVCTV) form a helical membrane-spanning segment. Residues 231–252 (KAAAAQQQESESTQKAEREVTR) are Cytoplasmic-facing. Residues 253-276 (MVILMVLGFLVAWTPYASVAAWIF) traverse the membrane as a helical segment. Residues 277–284 (FNRGAAFS) lie on the Extracellular side of the membrane. A helical membrane pass occupies residues 285–309 (AQFMAVPAFFSKSSSIFNPIIYVLL). N6-(retinylidene)lysine is present on K296. The Cytoplasmic segment spans residues 310 to 349 (NKQFRNCMLTTLFCGKNPLGDDESSTVSTSKTEVSSVSPA). The tract at residues 329-349 (GDDESSTVSTSKTEVSSVSPA) is disordered. A compositionally biased stretch (low complexity) spans 334–349 (STVSTSKTEVSSVSPA).

The protein belongs to the G-protein coupled receptor 1 family. Opsin subfamily. Post-translationally, phosphorylated on some or all of the serine and threonine residues present in the C-terminal region.

The protein resides in the membrane. In terms of biological role, visual pigments are the light-absorbing molecules that mediate vision. They consist of an apoprotein, opsin, covalently linked to cis-retinal. The sequence is that of Green-sensitive opsin-3 (opn1mw3) from Danio rerio (Zebrafish).